We begin with the raw amino-acid sequence, 347 residues long: Globoside alpha-1,3-N-acetylgalactosaminyltransferase 1 (347 aa).

Residues 1–5 (MRCRR) are Cytoplasmic-facing. Residues 6 to 26 (LALGLGFSLLSGIALWSLWIY) traverse the membrane as a helical; Signal-anchor for type II membrane protein segment. The Lumenal portion of the chain corresponds to 27–347 (METWLPFSYV…LDKATSWLRS (321 aa)). A glycan (N-linked (GlcNAc...) asparagine) is linked at Asn108. Substrate is bound by residues 116–121 (FAVGKY), 206–208 (DVD), and 228–231 (HPGY). Asp206 and Asp208 together coordinate Mn(2+). Glu298 acts as the Nucleophile in catalysis.

It belongs to the glycosyltransferase 6 family. Mn(2+) serves as cofactor.

The protein localises to the golgi apparatus membrane. The catalysed reaction is a globoside Gb4Cer (d18:1(4E)) + UDP-N-acetyl-alpha-D-galactosamine = a globoside Forssman (d18:1(4E)) + UDP + H(+). It catalyses the reaction a globoside Gb4Cer + UDP-N-acetyl-alpha-D-galactosamine = a globoside IV3GalNAc-Gb4Cer + UDP + H(+). Its pathway is protein modification; protein glycosylation. In terms of biological role, catalyzes the formation of Forssman glycolipid via the addition of N-acetylgalactosamine (GalNAc) in alpha-1,3-linkage to GalNAcb-1,3Gala-1,4Galb-1,4GlcCer (Gb4Cer). Forssman glycolipid (also called Forssman antigen; FG) probably serves for adherence of some pathogens such as E.coli uropathogenic strains. The protein is Globoside alpha-1,3-N-acetylgalactosaminyltransferase 1 of Canis lupus familiaris (Dog).